The following is a 403-amino-acid chain: Sorting nexin-32 (403 aa).

Residues Leu-20 to Ser-168 form the PX domain. Residues Asn-258–Arg-335 are a coiled coil.

The protein belongs to the sorting nexin family.

Its function is as follows. May be involved in several stages of intracellular trafficking. This chain is Sorting nexin-32 (SNX32), found in Homo sapiens (Human).